The chain runs to 277 residues: Urease accessory protein UreD (277 aa).

This sequence belongs to the UreD family. In terms of assembly, ureD, UreF and UreG form a complex that acts as a GTP-hydrolysis-dependent molecular chaperone, activating the urease apoprotein by helping to assemble the nickel containing metallocenter of UreC. The UreE protein probably delivers the nickel.

It is found in the cytoplasm. In terms of biological role, required for maturation of urease via the functional incorporation of the urease nickel metallocenter. The sequence is that of Urease accessory protein UreD from Sinorhizobium medicae (strain WSM419) (Ensifer medicae).